Reading from the N-terminus, the 147-residue chain is Transcriptional regulator MraZ (147 aa).

SpoVT-AbrB domains follow at residues 5 to 52 and 81 to 124; these read NHPT…PMEE and GQVV…NAEH.

It belongs to the MraZ family. As to quaternary structure, forms oligomers.

The protein resides in the cytoplasm. The protein localises to the nucleoid. The chain is Transcriptional regulator MraZ from Koribacter versatilis (strain Ellin345).